The primary structure comprises 365 residues: Probable 7-methylxanthine methyltransferase 4 (365 aa).

An S-adenosyl-L-homocysteine-binding site is contributed by tyrosine 18. Threonine 25 contacts theobromine. 6 residues coordinate S-adenosyl-L-homocysteine: cysteine 62, glutamine 67, aspartate 99, leucine 100, serine 132, and phenylalanine 133. Residues tyrosine 150, histidine 153, and tryptophan 154 each contribute to the theobromine site. Mg(2+) is bound by residues asparagine 170, aspartate 256, phenylalanine 258, and asparagine 259. Phenylalanine 311 contacts theobromine.

It belongs to the methyltransferase superfamily. Type-7 methyltransferase family. Requires Mg(2+) as cofactor.

The catalysed reaction is 7-methylxanthine + S-adenosyl-L-methionine = theobromine + S-adenosyl-L-homocysteine + H(+). Its pathway is alkaloid biosynthesis. In terms of biological role, involved in the biosynthesis of theobromine. This is Probable 7-methylxanthine methyltransferase 4 from Theobroma cacao (Cacao).